Consider the following 93-residue polypeptide: Pyrimidine/purine nucleoside phosphorylase (93 aa).

This sequence belongs to the nucleoside phosphorylase PpnP family.

It carries out the reaction a purine D-ribonucleoside + phosphate = a purine nucleobase + alpha-D-ribose 1-phosphate. The enzyme catalyses adenosine + phosphate = alpha-D-ribose 1-phosphate + adenine. The catalysed reaction is cytidine + phosphate = cytosine + alpha-D-ribose 1-phosphate. It catalyses the reaction guanosine + phosphate = alpha-D-ribose 1-phosphate + guanine. It carries out the reaction inosine + phosphate = alpha-D-ribose 1-phosphate + hypoxanthine. The enzyme catalyses thymidine + phosphate = 2-deoxy-alpha-D-ribose 1-phosphate + thymine. The catalysed reaction is uridine + phosphate = alpha-D-ribose 1-phosphate + uracil. It catalyses the reaction xanthosine + phosphate = alpha-D-ribose 1-phosphate + xanthine. Functionally, catalyzes the phosphorolysis of diverse nucleosides, yielding D-ribose 1-phosphate and the respective free bases. Can use uridine, adenosine, guanosine, cytidine, thymidine, inosine and xanthosine as substrates. Also catalyzes the reverse reactions. The sequence is that of Pyrimidine/purine nucleoside phosphorylase from Pseudomonas paraeruginosa (strain DSM 24068 / PA7) (Pseudomonas aeruginosa (strain PA7)).